Consider the following 845-residue polypeptide: MTPPSSSSHFPSPSSANNDFHSLSLEAHGSLSDKFISQFRLNYTIIPIAQKSNISLPFLTLSPCSFTICSLRARLHSLHGPSTVFLKRETSQISARVNDENGFTASPSFFSVDCFDELFPTLSTTDEQPKEPSIISISSSSSDPSSSPPPSSSLLKTPDNDFCARPETFVKSDTADIKLQIHQNNLVLTFLDTTTVSKVNIVLEIHIPVLRDFVTFEQYIPLMFLPSPFETILSFDNLKSDSPSSDLHLGWDHTVSKESMSQSIAEVLNPYNKGVSRSLNDATNMETYHWSPFPPQFSTFNDNALRLRIYYKPKSWLPKNSSCSLSVDVKATLLETTPPSCEVSYNLLLTCRSSNRFRLFPASTPNSNGLCRNDSKCRFLMILPETIIKSPSSFIGDSYNIANIDPPSSMNVQSSEFRVGEVQSFTTNTSSFAFTFKEIVQLGSKASVPMILFPAPSNYKLTIEKPPFPCDLTIPHTAINDSWLPMKLKETNAISYYRKTCSSCKYPFQFFINKLPFYQSPSLPLSATYVWIASALLSVQPGNGSFNIMLSLKFVSSMKPGTELLTIKQPKSSLLNWGLVNGYPKTEGRIVLLPRNDIVLIQADQPTSVFDLCWTIKPTYEKSSNFSCLQLPIPVLNTPILTPVTINIQSTTYYLIGYANQNSKKTLDQPTSLLVLGCKAKNVSELILSYLPEKPIPDGAPIVTNVVETNKTNEAPSSFRKCLQQFLVFLTFTGMTLFILYQLTFPYGVAKDNSSFIDTPLPHSCEMEKSLNVLQHKVLQLQAVNMKLHDYYEKEPTEIYKTVSVTSTQIMPAVTKMSSFELEREQFHKAFGFLRLNRKKDDNAN.

Residues 122–158 (LSTTDEQPKEPSIISISSSSSDPSSSPPPSSSLLKTP) are disordered. A compositionally biased stretch (low complexity) spans 132–145 (PSIISISSSSSDPS). The chain crosses the membrane as a helical span at residues 726–746 (FLVFLTFTGMTLFILYQLTFP).

It localises to the membrane. In terms of biological role, has a role in meiosis. This chain is Meiotically up-regulated gene 4 protein (mug4), found in Schizosaccharomyces pombe (strain 972 / ATCC 24843) (Fission yeast).